The following is a 454-amino-acid chain: uncharacterized protein (454 aa).

This is an uncharacterized protein from Rickettsia prowazekii (strain Madrid E).